The chain runs to 269 residues: Tryptophan synthase alpha chain (269 aa).

Active-site proton acceptor residues include glutamate 49 and aspartate 60.

Belongs to the TrpA family. As to quaternary structure, tetramer of two alpha and two beta chains.

The enzyme catalyses (1S,2R)-1-C-(indol-3-yl)glycerol 3-phosphate + L-serine = D-glyceraldehyde 3-phosphate + L-tryptophan + H2O. The protein operates within amino-acid biosynthesis; L-tryptophan biosynthesis; L-tryptophan from chorismate: step 5/5. In terms of biological role, the alpha subunit is responsible for the aldol cleavage of indoleglycerol phosphate to indole and glyceraldehyde 3-phosphate. This chain is Tryptophan synthase alpha chain, found in Enterobacter sp. (strain 638).